The following is a 234-amino-acid chain: Ribonuclease 3 (234 aa).

The 130-residue stretch at 4 to 133 folds into the RNase III domain; sequence LLDLEHKLNY…ILGAVYIDSN (130 aa). A Mg(2+)-binding site is contributed by E46. D50 is a catalytic residue. Mg(2+) contacts are provided by D119 and E122. E122 is a catalytic residue. A DRBM domain is found at 160–228; that stretch reads DFKSILQEYV…AKALCIKLGV (69 aa).

This sequence belongs to the ribonuclease III family. As to quaternary structure, homodimer. Mg(2+) serves as cofactor.

Its subcellular location is the cytoplasm. The enzyme catalyses Endonucleolytic cleavage to 5'-phosphomonoester.. In terms of biological role, digests double-stranded RNA. Involved in the processing of primary rRNA transcript to yield the immediate precursors to the large and small rRNAs (23S and 16S). Processes some mRNAs, and tRNAs when they are encoded in the rRNA operon. Processes pre-crRNA and tracrRNA of type II CRISPR loci if present in the organism. This chain is Ribonuclease 3, found in Fusobacterium nucleatum subsp. nucleatum (strain ATCC 25586 / DSM 15643 / BCRC 10681 / CIP 101130 / JCM 8532 / KCTC 2640 / LMG 13131 / VPI 4355).